The primary structure comprises 472 residues: N(6)-adenine-specific methyltransferase METTL4 (472 aa).

The protein belongs to the MT-A70-like family.

Its subcellular location is the nucleus. The protein localises to the cytoplasm. It localises to the cytosol. The protein resides in the mitochondrion matrix. The enzyme catalyses a 2'-O-methyladenosine in U2 snRNA + S-adenosyl-L-methionine = an N(6)-methyl-2'-O-methyladenosine in U2 snRNA + S-adenosyl-L-homocysteine + H(+). It carries out the reaction a 2'-deoxyadenosine in DNA + S-adenosyl-L-methionine = an N(6)-methyl-2'-deoxyadenosine in DNA + S-adenosyl-L-homocysteine + H(+). Functionally, n(6)-adenine-specific methyltransferase that can methylate both RNAs and DNA. Acts as a N(6)-adenine-specific RNA methyltransferase by catalyzing formation of N6,2'-O-dimethyladenosine (m6A(m)) on internal positions of U2 small nuclear RNA (snRNA): methylates the 6th position of adenine residues with a pre-deposited 2'-O-methylation. Internal m6A(m) methylation of snRNAs regulates RNA splicing. Also able to act as a N(6)-adenine-specific DNA methyltransferase by mediating methylation of DNA on the 6th position of adenine (N(6)-methyladenosine). The existence of N(6)-methyladenosine (m6A) on DNA is however unclear in mammals, and additional evidences are required to confirm the role of the N(6)-adenine-specific DNA methyltransferase activity of METTL4 in vivo. Acts as a regulator of mitochondrial transcript levels and mitochondrial DNA (mtDNA) copy number by mediating mtDNA N(6)-methylation: m6A on mtDNA reduces transcription by repressing TFAM DNA-binding and bending. N(6)-methyladenosine deposition by METTL4 regulates Polycomb silencing by triggering ubiquitination and degradation of sensor proteins ASXL1 and MPND, leading to inactivation of the PR-DUB complex and subsequent preservation of Polycomb silencing. This is N(6)-adenine-specific methyltransferase METTL4 from Homo sapiens (Human).